Here is a 135-residue protein sequence, read N- to C-terminus: MAKLFTLCWKYLRAIVLIYLCLFAGNAIAALLPIAIPGSIIGMLLLFALLSTQIMPARWVKPGCHLLIRYMVLLFVPIGVGVMKYYDQILDHLGPLVVSCIISTLMVLVVVGYTSHYFHRERRIVGKPDAAEGEK.

Helical transmembrane passes span 4–24, 30–50, 63–83, and 93–113; these read LFTL…CLFA, ALLP…FALL, GCHL…VGVM, and LGPL…VVGY.

Belongs to the UPF0299 family.

Its subcellular location is the cell inner membrane. The chain is UPF0299 membrane protein Spro_1570 from Serratia proteamaculans (strain 568).